We begin with the raw amino-acid sequence, 259 residues long: Type III pantothenate kinase (259 aa).

6–13 (DIGNTNIT) is a binding site for ATP. Residue 113 to 116 (GADR) participates in substrate binding. The active-site Proton acceptor is Asp-115. Asp-135 lines the K(+) pocket. Position 138 (Thr-138) interacts with ATP. Thr-190 serves as a coordination point for substrate.

This sequence belongs to the type III pantothenate kinase family. Homodimer. NH4(+) is required as a cofactor. Requires K(+) as cofactor.

Its subcellular location is the cytoplasm. The enzyme catalyses (R)-pantothenate + ATP = (R)-4'-phosphopantothenate + ADP + H(+). The protein operates within cofactor biosynthesis; coenzyme A biosynthesis; CoA from (R)-pantothenate: step 1/5. Catalyzes the phosphorylation of pantothenate (Pan), the first step in CoA biosynthesis. The chain is Type III pantothenate kinase from Endomicrobium trichonymphae.